Reading from the N-terminus, the 677-residue chain is Methionine--tRNA ligase (677 aa).

The 'HIGH' region signature appears at 15–25 (PYANGSIHLGH). 4 residues coordinate Zn(2+): cysteine 146, cysteine 149, cysteine 159, and cysteine 162. The short motif at 333-337 (KMSKS) is the 'KMSKS' region element. ATP is bound at residue lysine 336. The tRNA-binding domain maps to 575 to 677 (DFAKVDLRVA…AGAKPGHQVK (103 aa)).

Belongs to the class-I aminoacyl-tRNA synthetase family. MetG type 1 subfamily. Homodimer. Zn(2+) serves as cofactor.

Its subcellular location is the cytoplasm. It carries out the reaction tRNA(Met) + L-methionine + ATP = L-methionyl-tRNA(Met) + AMP + diphosphate. Is required not only for elongation of protein synthesis but also for the initiation of all mRNA translation through initiator tRNA(fMet) aminoacylation. The protein is Methionine--tRNA ligase of Shigella sonnei (strain Ss046).